The chain runs to 169 residues: Small ribosomal subunit protein uS5 (169 aa).

Residues 13–76 (LVEKLVSVRR…EKARRNMKDV (64 aa)) enclose the S5 DRBM domain.

Belongs to the universal ribosomal protein uS5 family. In terms of assembly, part of the 30S ribosomal subunit. Contacts proteins S4 and S8.

Its function is as follows. With S4 and S12 plays an important role in translational accuracy. Located at the back of the 30S subunit body where it stabilizes the conformation of the head with respect to the body. The polypeptide is Small ribosomal subunit protein uS5 (Hydrogenovibrio crunogenus (strain DSM 25203 / XCL-2) (Thiomicrospira crunogena)).